Here is a 600-residue protein sequence, read N- to C-terminus: Jacalin-related lectin 18 (600 aa).

Jacalin-type lectin domains are found at residues 12–158 (TQRL…YFTC), 161–303 (PTRM…YFTT), 304–447 (SPFI…YFRL), and 454–597 (GEKV…HVLP).

It belongs to the jacalin lectin family.

In Arabidopsis thaliana (Mouse-ear cress), this protein is Jacalin-related lectin 18 (JAL18).